The chain runs to 783 residues: Probable potassium transporter 2 (783 aa).

At 1–21 (MDAEAGVGGADQLPWRQHYRN) the chain is on the cytoplasmic side. The helical transmembrane segment at 22–42 (LLLLAYQSFGVVYGDLSTSPL) threads the bilayer. At 43 to 61 (YVYKSTFSGRLRRYQDEQT) the chain is on the extracellular side. A helical transmembrane segment spans residues 62–82 (VFGVLSLIFWTFTLIPLLKYV). At 83-152 (TIVLSADDNG…FMEKHKNART (70 aa)) the chain is on the cytoplasmic side. The helical transmembrane segment at 153–173 (VLLLIVLCGASMMIGDGILTP) threads the bilayer. The Extracellular portion of the chain corresponds to 174 to 189 (AISVLSSMSGLKVRAT). The helical transmembrane segment at 190–210 (GLHDRSVVLLSCIVLVGLFAL) threads the bilayer. Residues 211–217 (QHRGTQK) lie on the Cytoplasmic side of the membrane. The chain crosses the membrane as a helical span at residues 218–238 (VAFMFAPIVVIWLFCIGGIGL). Residues 239-268 (YNIIHWNPRIYQALSPYYIVKFFRTTGKDG) lie on the Extracellular side of the membrane. The helical transmembrane segment at 269–289 (WIALGGILLSMTGCEAMFADL) threads the bilayer. Residues 290-298 (GHFTSASVR) lie on the Cytoplasmic side of the membrane. Residues 299–319 (LAFITIIYPCLILQYMGQAAF) traverse the membrane as a helical segment. Residues 320–338 (LSKNILDMPTGFYDSIPGP) lie on the Extracellular side of the membrane. The helical transmembrane segment at 339–359 (IFWPVFVVATLAAVVGSQAVI) threads the bilayer. The Cytoplasmic segment spans residues 360–390 (SATFSIVKQCHSLGCFPRVKVVHTSRWIYGQ). A helical transmembrane segment spans residues 391–411 (IYIPEINWILMVLCVAVTVAF). At 412–422 (RDITLIGNAYG) the chain is on the extracellular side. A helical membrane pass occupies residues 423–443 (VACMTVMFVTTFLMALIMIFV). The Cytoplasmic segment spans residues 444–447 (WQKN). A helical membrane pass occupies residues 448-468 (IIFALSFFLLFGSVEVVYLSS). The Extracellular segment spans residues 469 to 475 (SLMKVTQ). Residues 476 to 496 (GGWVPLVLALIFMSVMYIWHY) traverse the membrane as a helical segment. Residues 497 to 783 (GTRKKYQYDL…LIEVGMAYQV (287 aa)) are Cytoplasmic-facing. Residues 662–691 (DLADSMTMRSTKSESLRSLQSSYEQESPNV) form a disordered region. Polar residues predominate over residues 677–691 (LRSLQSSYEQESPNV).

This sequence belongs to the HAK/KUP transporter (TC 2.A.72.3) family.

The protein resides in the cell membrane. The catalysed reaction is K(+)(in) = K(+)(out). It carries out the reaction Na(+)(in) = Na(+)(out). Functionally, high-affinity potassium transporter. Can transport sodium under high sodium and low potassium concentrations in the extracellular environment. This Oryza sativa subsp. japonica (Rice) protein is Probable potassium transporter 2 (HAK2).